We begin with the raw amino-acid sequence, 360 residues long: MKTERVNVNVNNQPYPIYIGENLLQDKSLLQRHVKGRQVMIVSNETIAAFYLDPLKAIYQDFQCDTFILPDGEQYKTLEYWERILHKLASCNHHRDTTLIALGGGVVGDITGFAAACYQRGVDFIQVPTTLLAQVDASIGGKTAVNHPVGKNLIGAFHQPKAVIIDLNTLNTLPEREFKAGMAEIVKAALIKDEKFFTDLENKMSALLQRNFIFLQAVIKRAAEIKRDIVNADEKERSGERTLLNLGHTFAHAIERLLGYGQWLHGEAVSAGLVLAAQLSHRKNLLDFESLQRICRLLTQISLPIHFPKSINADELLSAMYMDKKVANERLHLILLEDLGHAVVSDQVDDRELKSFLENG.

Residues 71–76 (DGEQYK), 105–109 (GVVGD), 129–130 (TT), lysine 142, lysine 151, and 169–172 (TLNT) contribute to the NAD(+) site. The Zn(2+) site is built by glutamate 184, histidine 248, and histidine 265.

This sequence belongs to the sugar phosphate cyclases superfamily. Dehydroquinate synthase family. It depends on Co(2+) as a cofactor. Zn(2+) is required as a cofactor. The cofactor is NAD(+).

The protein localises to the cytoplasm. It catalyses the reaction 7-phospho-2-dehydro-3-deoxy-D-arabino-heptonate = 3-dehydroquinate + phosphate. Its pathway is metabolic intermediate biosynthesis; chorismate biosynthesis; chorismate from D-erythrose 4-phosphate and phosphoenolpyruvate: step 2/7. Functionally, catalyzes the conversion of 3-deoxy-D-arabino-heptulosonate 7-phosphate (DAHP) to dehydroquinate (DHQ). In Coxiella burnetii (strain CbuG_Q212) (Coxiella burnetii (strain Q212)), this protein is 3-dehydroquinate synthase.